A 130-amino-acid polypeptide reads, in one-letter code: Small ribosomal subunit protein bS16 (130 aa).

Residues 82–130 (VLPKTERNNPKKAVPGKKAQDRAEEKAAKAAEASEAPADEAPAEEAAAE) are disordered. Over residues 99-110 (KAQDRAEEKAAK) the composition is skewed to basic and acidic residues. The segment covering 118–130 (PADEAPAEEAAAE) has biased composition (acidic residues).

The protein belongs to the bacterial ribosomal protein bS16 family.

This chain is Small ribosomal subunit protein bS16, found in Dinoroseobacter shibae (strain DSM 16493 / NCIMB 14021 / DFL 12).